A 145-amino-acid polypeptide reads, in one-letter code: Secreted RxLR effector protein 43 (145 aa).

The N-terminal stretch at 1-20 (MKVTMALAALCVALQAPCIG) is a signal peptide. The RxLR motif lies at 31–34 (RHLR).

This sequence belongs to the RxLR effector family.

It is found in the secreted. It localises to the host nucleus. The protein resides in the host cytoplasm. In terms of biological role, secreted effector that completely suppresses the host cell death induced by cell death-inducing proteins. The chain is Secreted RxLR effector protein 43 from Plasmopara viticola (Downy mildew of grapevine).